Here is a 1737-residue protein sequence, read N- to C-terminus: Myosin-M heavy chain (1737 aa).

The 52-residue stretch at 4–55 (LEGDIVWVPHTVNGYCRGKIIGYNEKNQVTVRLLELNEEIKINEQLIQNYNQ) folds into the Myosin N-terminal SH3-like domain. Residues 59–886 (KDFSDMVEIQ…LYIYLEKKRY (828 aa)) enclose the Myosin motor domain. 154–161 (GESGSGKT) serves as a coordination point for ATP. A disordered region spans residues 640 to 727 (KSNDNNSNNN…NNNSSNNKKS (88 aa)). Low complexity-rich tracts occupy residues 641–663 (SNDNNSNNNNSNNNSSSSSSSQS) and 679–724 (NSGS…SSNN). The actin-binding stretch occupies residues 754-761 (YIRCIKPN). IQ domains are found at residues 889 to 918 (LVDSVLKIQAFFKMIKIRNQYKRNKESSLF) and 912 to 941 (NKESSLFLQTLIRAQRAKKDFEQLVILENK). Positions 926–1039 (QRAKKDFEQL…KKKNEQNLSL (114 aa)) form a coiled coil. Basic and acidic residues predominate over residues 947 to 1028 (RKKELERQRK…IEKKRKEEEK (82 aa)). Disordered regions lie at residues 947 to 1099 (RKKE…PSTK), 1117 to 1199 (LHGS…PNFN), 1266 to 1290 (GINKPIPQRTISSSENSPLSRANSS), and 1304 to 1364 (SLST…SNED). Positions 1044 to 1070 (ITNSPSLINTTTTTTTTTTTTTNTSSP) are enriched in low complexity. A compositionally biased stretch (pro residues) spans 1071 to 1081 (PLSPPISPRPS). Positions 1082–1098 (TPSSTSSSSSTTSSPST) are enriched in low complexity. The segment covering 1121–1131 (SHSDKNSKEDN) has biased composition (basic and acidic residues). Residues 1132 to 1141 (NSNNNNNGDS) are compositionally biased toward low complexity. Positions 1143-1153 (IILSSDSSFGQ) are enriched in polar residues. Over residues 1162-1171 (PTPPPPPPLK) the composition is skewed to pro residues. Composition is skewed to polar residues over residues 1180 to 1198 (GVENNSSPNLWSHRNSPNF) and 1274 to 1288 (RTISSSENSPLSRAN). The span at 1304–1359 (SLSTSTTPSTPTTPKTPTTLSSSSVSTSTSLSSVSSSVSSSSSSSIPTPIIESTPS) shows a compositional bias: low complexity. One can recognise a DH domain in the interval 1389–1572 (FRIKIINELI…SDIVQSINEA (184 aa)). The region spanning 1603 to 1714 (TLLMEGTVSA…WFKQIKALIQ (112 aa)) is the PH domain.

It belongs to the TRAFAC class myosin-kinesin ATPase superfamily. Myosin family. Monomer.

It localises to the cytoplasm. In terms of biological role, myosins are actin-based motor molecules with ATPase activity. Involved in macropinocytosis and remodeling of actin cytoskeleton. In Dictyostelium discoideum (Social amoeba), this protein is Myosin-M heavy chain (myoM).